Here is a 663-residue protein sequence, read N- to C-terminus: UvrABC system protein B (663 aa).

Over residues 1–10 the composition is skewed to basic and acidic residues; it reads MIDKRDDKPF. Residues 1–23 are disordered; that stretch reads MIDKRDDKPFKLKSKYKPSGDQP. Positions 31–418 constitute a Helicase ATP-binding domain; that stretch reads DNIEGGEKAQ…TNTIIEQIIR (388 aa). 44–51 contributes to the ATP binding site; sequence GATGTGKT. The Beta-hairpin motif lies at 97-120; sequence YYDYYQPEAYVPSSDTYIEKDSSV. The Helicase C-terminal domain occupies 435 to 601; sequence QMDDLLGEIN…TIKKDIRGLI (167 aa). The UVR domain occupies 627-662; it reads KEAINALQKQMQEAAELLDFELAAQMRDLILELKLM.

Belongs to the UvrB family. In terms of assembly, forms a heterotetramer with UvrA during the search for lesions. Interacts with UvrC in an incision complex.

It is found in the cytoplasm. The UvrABC repair system catalyzes the recognition and processing of DNA lesions. A damage recognition complex composed of 2 UvrA and 2 UvrB subunits scans DNA for abnormalities. Upon binding of the UvrA(2)B(2) complex to a putative damaged site, the DNA wraps around one UvrB monomer. DNA wrap is dependent on ATP binding by UvrB and probably causes local melting of the DNA helix, facilitating insertion of UvrB beta-hairpin between the DNA strands. Then UvrB probes one DNA strand for the presence of a lesion. If a lesion is found the UvrA subunits dissociate and the UvrB-DNA preincision complex is formed. This complex is subsequently bound by UvrC and the second UvrB is released. If no lesion is found, the DNA wraps around the other UvrB subunit that will check the other stand for damage. The protein is UvrABC system protein B of Streptococcus pyogenes serotype M3 (strain ATCC BAA-595 / MGAS315).